The sequence spans 510 residues: NAD(P)H-quinone oxidoreductase subunit 2 A, chloroplastic (510 aa).

A run of 14 helical transmembrane segments spans residues 31 to 51 (FIFPECILIFGLILLLMIDLT), 59 to 79 (WFYFISSTSLVISITALLFRW), 99 to 119 (IFQFLILLCSTLCIPLSVEYI), 124 to 144 (MAITEFLLFVLTATLGGMFLC), 149 to 169 (LITIFVALECFSLCSYLLSGY), 184 to 204 (LLMGGASSSILVYGFSWLYGL), 229 to 249 (ISIALIFITVGLGFKLSLAPF), 261 to 281 (PTPVVAFLSVTSKVAALALAT), 295 to 315 (WHLLLEILAILSMILGNLLAI), 323 to 343 (MLAYSSIGQIGYVIIGIIVGD), 354 to 374 (YMLFYISMNLGTFACIVLFGL), 395 to 415 (ALSLALCLLSLGGLPPLAGFF), 418 to 438 (LYLFWCGWQAGLYFLVSIGLL), and 484 to 504 (MTVCVIASTILGISMNPILAI).

Belongs to the complex I subunit 2 family. NDH is composed of at least 16 different subunits, 5 of which are encoded in the nucleus.

It localises to the plastid. Its subcellular location is the chloroplast thylakoid membrane. It carries out the reaction a plastoquinone + NADH + (n+1) H(+)(in) = a plastoquinol + NAD(+) + n H(+)(out). The catalysed reaction is a plastoquinone + NADPH + (n+1) H(+)(in) = a plastoquinol + NADP(+) + n H(+)(out). NDH shuttles electrons from NAD(P)H:plastoquinone, via FMN and iron-sulfur (Fe-S) centers, to quinones in the photosynthetic chain and possibly in a chloroplast respiratory chain. The immediate electron acceptor for the enzyme in this species is believed to be plastoquinone. Couples the redox reaction to proton translocation, and thus conserves the redox energy in a proton gradient. This is NAD(P)H-quinone oxidoreductase subunit 2 A, chloroplastic from Oryza sativa subsp. japonica (Rice).